A 154-amino-acid chain; its full sequence is Ribonuclease H (154 aa).

Residues 1-142 enclose the RNase H type-1 domain; sequence MTKHVEIFTD…CDELARTAAE (142 aa). 4 residues coordinate Mg(2+): D10, E48, D70, and D134.

The protein belongs to the RNase H family. As to quaternary structure, monomer. It depends on Mg(2+) as a cofactor.

It is found in the cytoplasm. It catalyses the reaction Endonucleolytic cleavage to 5'-phosphomonoester.. Its function is as follows. Endonuclease that specifically degrades the RNA of RNA-DNA hybrids. The chain is Ribonuclease H from Vibrio campbellii (strain ATCC BAA-1116).